The chain runs to 269 residues: Tryptophan synthase alpha chain (269 aa).

Active-site proton acceptor residues include glutamate 49 and aspartate 60.

This sequence belongs to the TrpA family. In terms of assembly, tetramer of two alpha and two beta chains.

The catalysed reaction is (1S,2R)-1-C-(indol-3-yl)glycerol 3-phosphate + L-serine = D-glyceraldehyde 3-phosphate + L-tryptophan + H2O. The protein operates within amino-acid biosynthesis; L-tryptophan biosynthesis; L-tryptophan from chorismate: step 5/5. In terms of biological role, the alpha subunit is responsible for the aldol cleavage of indoleglycerol phosphate to indole and glyceraldehyde 3-phosphate. The chain is Tryptophan synthase alpha chain from Salmonella arizonae (strain ATCC BAA-731 / CDC346-86 / RSK2980).